The sequence spans 265 residues: Transglycosylase (265 aa).

The interval 19 to 98 is slt-type domain; sequence NLDPRLVAGV…NTALLAYHGG (80 aa). Residue Glu32 is part of the active site. The chain crosses the membrane as a helical span at residues 219–239; that stretch reads LRGVVIIAAVAIVVVGLYFLF.

It belongs to the transglycosylase Slt family. As to quaternary structure, heteromultimer composed of proteins P7 and P14.

It is found in the virion membrane. The enzyme catalyses Exolytic cleavage of the (1-&gt;4)-beta-glycosidic linkage between N-acetylmuramic acid (MurNAc) and N-acetylglucosamine (GlcNAc) residues in peptidoglycan, from either the reducing or the non-reducing ends of the peptidoglycan chains, with concomitant formation of a 1,6-anhydrobond in the MurNAc residue.. Functionally, component of the phage ejection machinery which acts as an exolysin. Muralytic protein involved in host peptidoglycan digestion necessary for viral DNA entry into the host cell. Does not display any enzymatic activity. Required for DNA injection in the membrane transformation event. Involved in the formation of the membrane tail tube to connect the virus interior with the host cytosol. Essential for viral infectivity. This chain is Transglycosylase (VII), found in Acinetobacter calcoaceticus (Arthrobacter siderocapsulatus).